The chain runs to 868 residues: Alanine--tRNA ligase (868 aa).

Zn(2+) is bound by residues histidine 556, histidine 560, cysteine 666, and histidine 670.

The protein belongs to the class-II aminoacyl-tRNA synthetase family. Zn(2+) serves as cofactor.

It is found in the cytoplasm. The catalysed reaction is tRNA(Ala) + L-alanine + ATP = L-alanyl-tRNA(Ala) + AMP + diphosphate. Catalyzes the attachment of alanine to tRNA(Ala) in a two-step reaction: alanine is first activated by ATP to form Ala-AMP and then transferred to the acceptor end of tRNA(Ala). Also edits incorrectly charged Ser-tRNA(Ala) and Gly-tRNA(Ala) via its editing domain. This Elusimicrobium minutum (strain Pei191) protein is Alanine--tRNA ligase.